The sequence spans 111 residues: Shuttling pre-60S factor C23B6.02c (111 aa).

Basic residues-rich tracts occupy residues 1–12 and 59–73; these read MAKKQSIRSRNF and SKKK…KKAK. Disordered stretches follow at residues 1–25 and 47–111; these read MAKK…DSST and ALRS…QGDE. A compositionally biased stretch (basic and acidic residues) spans 83–111; it reads QAREERLDTKISKSLQKQEKLKARKQGDE.

The protein belongs to the ECM1 family. Associates with the pre-60S ribosomal particle and the nucleopore complex.

The protein localises to the nucleus. The protein resides in the nucleolus. It is found in the cytoplasm. In terms of biological role, pre-ribosomal factor involved in 60S ribosomal protein subunit export from the nucleus. The sequence is that of Shuttling pre-60S factor C23B6.02c from Schizosaccharomyces pombe (strain 972 / ATCC 24843) (Fission yeast).